The primary structure comprises 268 residues: Movement protein (268 aa).

Positions 215-243 (GKKSDVRKGKNSSSDRSVPNKNYRNVKDF) are disordered. Residues 225–237 (NSSSDRSVPNKNY) are compositionally biased toward polar residues.

It belongs to the tobamovirus movement protein family. In terms of assembly, binds to host RBCS at the plasmodesmata; this interaction seems required for viral systemic movement. In resistant plants, interacts with host MBP2C at host microtubules; this interaction prevents virus cell to cell movement. In resistant plants, interacts with host resistance (R) protein (e.g. tomato ToMV resistance protein TM-2(2), AC Q71BG9) at the host plasma membrane; this interaction triggers host defense responses leading to programmed cell death.

It localises to the host cytoplasm. The protein localises to the host cytoskeleton. It is found in the host cell junction. The protein resides in the host plasmodesma. Its function is as follows. Transports viral genome to neighboring plant cells directly through plasmosdesmata, without any budding. The movement protein allows efficient cell to cell propagation, by bypassing the host cell wall barrier. Forms a ribonucleoprotein complex with viral RNA. Binds microtubules and modulates microtubule stability. Can bind double-stranded DNA. Triggers host hypersensitive defense reaction in incompatible plants harboring resistance (R) proteins. The chain is Movement protein (MP) from Nicotiana tabacum (Common tobacco).